The sequence spans 910 residues: Seizure 6-like protein 2 (910 aa).

Positions 1–27 (MGTPKAQHPPPSQLLLLILLSCAWIEG) are cleaved as a signal peptide. At 28–844 (LPLKEDEMMP…DPSRQLEGGN (817 aa)) the chain is on the extracellular side. The tract at residues 70–152 (PGSDPDPTLA…PLRPEGGEEE (83 aa)) is disordered. The span at 123-145 (LTPPPGTTAPPPPGPASPVPPLR) shows a compositional bias: pro residues. An intrachain disulfide couples Cys-173 to Cys-202. The region spanning 173 to 286 (CNNNISEGEG…NGFRIHYQAY (114 aa)) is the CUB 1 domain. Residue Asn-222 is glycosylated (N-linked (GlcNAc...) asparagine). A Sushi 1 domain is found at 288–347 (LSCGFPPRPAHGDVSVTDLHPGGTATFHCDSGYQLQGEETLICLNGTRPAWTGEPPSCTA). Disulfide bonds link Cys-290-Cys-330, Cys-316-Cys-345, Cys-349-Cys-376, Cys-464-Cys-508, Cys-491-Cys-523, Cys-527-Cys-553, Cys-644-Cys-686, Cys-672-Cys-699, Cys-705-Cys-747, Cys-733-Cys-764, Cys-771-Cys-813, and Cys-799-Cys-828. 4 N-linked (GlcNAc...) asparagine glycosylation sites follow: Asn-332, Asn-373, Asn-473, and Asn-517. Residues 349-459 (CGGTIHNATL…LLLSLRFEAF (111 aa)) form the CUB 2 domain. The 64-residue stretch at 462–525 (DRCFPPFLAH…WNDTEPACKA (64 aa)) folds into the Sushi 2 domain. The region spanning 527-638 (CGGELSEPAG…QGFVLHFKEV (112 aa)) is the CUB 3 domain. Sushi domains follow at residues 642 to 701 (DTCP…ACQK), 703 to 766 (MTCA…KCAL), and 769 to 830 (EPCL…LCKV). The helical transmembrane segment at 845 to 865 (LALAILLPLGLVIVLGIGVYI) threads the bilayer. Residues 866–910 (YYTKLQGKSLFGFSGSHSYSPITVESDFSNPLYEAGDTREYEVSI) lie on the Cytoplasmic side of the membrane.

Belongs to the SEZ6 family. As to expression, expressed exclusively in the brain, predominantly in the neurons. Wide expression in the gray matter of the brain with high levels in the olfactory bulb, anterior olfactory nuclei, hippocampal formation and cerebellar cortex. Detected diffusely and weakly in the white matter, such as the corpus callosum and cerebellar medulla. In the cerebellar cortex, intensely expressed in Purkinje cells (PC) and granule cells. Detected also in interneurons in the molecular layer. Up-regulated at two weeks after birth.

The protein localises to the cell membrane. It is found in the endoplasmic reticulum membrane. Functionally, may contribute to specialized endoplasmic reticulum functions in neurons. This is Seizure 6-like protein 2 (Sez6l2) from Mus musculus (Mouse).